We begin with the raw amino-acid sequence, 547 residues long: Intercellular adhesion molecule 3 (547 aa).

Positions Met-1–Gly-29 are cleaved as a signal peptide. Topologically, residues Gln-30–His-485 are extracellular. One can recognise an Ig-like C2-type 1 domain in the interval Gly-46–Ser-103. 6 N-linked (GlcNAc...) asparagine glycosylation sites follow: Asn-52, Asn-84, Asn-87, Asn-101, Asn-110, and Asn-134. 2 disulfide bridges follow: Cys-53–Cys-96 and Cys-57–Cys-100. An Ig-like C2-type 2 domain is found at Gly-132–Gln-197. Cysteines 139 and 190 form a disulfide. N-linked (GlcNAc...) asparagine glycosylation is found at Asn-206, Asn-264, Asn-295, Asn-308, Asn-320, Asn-363, Asn-389, Asn-453, and Asn-457. The region spanning Glu-234–Glu-301 is the Ig-like C2-type 3 domain. A disulfide bridge links Cys-241 with Cys-294. In terms of domain architecture, Ig-like C2-type 4 spans Gly-329–Asp-382. A disulfide bridge connects residues Cys-336 and Cys-375. In terms of domain architecture, Ig-like C2-type 5 spans Lys-416–Gly-469. Residues Cys-423 and Cys-462 are joined by a disulfide bond. The helical transmembrane segment at Phe-486–Phe-510 threads the bilayer. Over Arg-511 to Glu-547 the chain is Cytoplasmic.

It belongs to the immunoglobulin superfamily. ICAM family. Interacts with moesin/MSN. Post-translationally, upon stimulation by a physiologic stimuli becomes rapidly and transiently phosphorylated on serine residues. In terms of tissue distribution, leukocytes.

The protein localises to the membrane. ICAM proteins are ligands for the leukocyte adhesion protein LFA-1 (integrin alpha-L/beta-2). ICAM3 is also a ligand for integrin alpha-D/beta-2. In association with integrin alpha-L/beta-2, contributes to apoptotic neutrophil phagocytosis by macrophages. The polypeptide is Intercellular adhesion molecule 3 (ICAM3) (Pan troglodytes (Chimpanzee)).